The primary structure comprises 292 residues: 3-methyl-2-oxobutanoate hydroxymethyltransferase 2 (292 aa).

Positions 52 and 91 each coordinate Mg(2+). Residues 52-53 (DS), Asp-91, and Lys-120 contribute to the 3-methyl-2-oxobutanoate site. A Mg(2+)-binding site is contributed by Glu-122. Residue Glu-189 is the Proton acceptor of the active site.

Belongs to the PanB family. In terms of assembly, homodecamer; pentamer of dimers. The cofactor is Mg(2+).

The protein localises to the cytoplasm. The enzyme catalyses 3-methyl-2-oxobutanoate + (6R)-5,10-methylene-5,6,7,8-tetrahydrofolate + H2O = 2-dehydropantoate + (6S)-5,6,7,8-tetrahydrofolate. It functions in the pathway cofactor biosynthesis; (R)-pantothenate biosynthesis; (R)-pantoate from 3-methyl-2-oxobutanoate: step 1/2. Catalyzes the reversible reaction in which hydroxymethyl group from 5,10-methylenetetrahydrofolate is transferred onto alpha-ketoisovalerate to form ketopantoate. This chain is 3-methyl-2-oxobutanoate hydroxymethyltransferase 2, found in Bradyrhizobium diazoefficiens (strain JCM 10833 / BCRC 13528 / IAM 13628 / NBRC 14792 / USDA 110).